Here is a 309-residue protein sequence, read N- to C-terminus: Methionyl-tRNA formyltransferase (309 aa).

107–110 serves as a coordination point for (6S)-5,6,7,8-tetrahydrofolate; that stretch reads SLLP.

It belongs to the Fmt family.

The catalysed reaction is L-methionyl-tRNA(fMet) + (6R)-10-formyltetrahydrofolate = N-formyl-L-methionyl-tRNA(fMet) + (6S)-5,6,7,8-tetrahydrofolate + H(+). In terms of biological role, attaches a formyl group to the free amino group of methionyl-tRNA(fMet). The formyl group appears to play a dual role in the initiator identity of N-formylmethionyl-tRNA by promoting its recognition by IF2 and preventing the misappropriation of this tRNA by the elongation apparatus. In Borrelia recurrentis (strain A1), this protein is Methionyl-tRNA formyltransferase.